The sequence spans 535 residues: Arylsulfatase K (535 aa).

The first 21 residues, 1–21 (MGSGGPLLLLRGLLLVGAAYC), serve as a signal peptide directing secretion. Asp41 and Cys81 together coordinate Ca(2+). Cys81 acts as the Nucleophile in catalysis. 3-oxoalanine (Cys) is present on Cys81. Lys129 is a substrate binding site. A glycan (N-linked (GlcNAc...) asparagine) is linked at Asn194. His252 contacts substrate. Asn263 carries an N-linked (GlcNAc...) asparagine glycan. Residues Asp314 and His315 each coordinate Ca(2+). 3 N-linked (GlcNAc...) asparagine glycosylation sites follow: Asn376, Asn414, and Asn499.

It belongs to the sulfatase family. Requires Ca(2+) as cofactor. The conversion to 3-oxoalanine (also known as C-formylglycine, FGly), of a serine or cysteine residue in prokaryotes and of a cysteine residue in eukaryotes, is critical for catalytic activity.

The protein resides in the secreted. It is found in the lysosome. It catalyses the reaction an aryl sulfate + H2O = a phenol + sulfate + H(+). The enzyme catalyses Hydrolysis of the 2-sulfate groups of the 2-O-sulfo-D-glucuronate residues of chondroitin sulfate, heparin and heparitin sulfate.. In terms of biological role, catalyzes the hydrolysis of pseudosubstrates such as p-nitrocatechol sulfate and p-nitrophenyl sulfate. Catalyzes the hydrolysis of the 2-sulfate groups of the 2-O-sulfo-D-glucuronate residues of chondroitin sulfate, heparin and heparitin sulfate. Acts selectively on 2-sulfoglucuronate and lacks activity against 2-sulfoiduronate. This is Arylsulfatase K (ARSK) from Gallus gallus (Chicken).